We begin with the raw amino-acid sequence, 477 residues long: MATTCEEVLVSPVKSTAVTPLKIRELINEGIVCGERSGIGRKEASETPEENTAFEDLPGNNSYESTSKDAFFSRVESFSSLKWAGKPPELCPLICAKYGWCNIECDMLKCSSCNAYLCASLQPILDFSKYKQRCVELQEALRKAHEKFCFWPDSPCPEHFWALLVTEPSSVLSDFVERFHNLCHLEMQLPSLKHEDVKSMDITEDTVSRLLRLIEDELKPKEGREANSHSLPSDSLQVHISACILALCGWNTSFSSGSLCIINCPRCMRKVGLWAFQQLETVELDNSLSAPGTPVSPAEGHERSPLGFMSPSRRVTRSRDAEQSPAFAYGRTRSSDLLSPADSEAVRNRPVTRSMGQGENTGLGNELHSSPHRRAKRPRLCSSSSSDTSPRSCFDPLSQHRSWCPWVNVCQASGTNTMGSEIQEEARRKEYGWKEVLKVLLAEENSRTISNPDTSSVPEKSHKVFRIFRQWQLAASS.

A C3HC-type zinc finger spans residues 95–149 (CAKYGWCNIECDMLKCSSCNAYLCASLQPILDFSKYKQRCVELQEALRKAHEKFC). A disordered region spans residues 287-392 (SLSAPGTPVS…SSSSDTSPRS (106 aa)). Polar residues predominate over residues 354-363 (SMGQGENTGL). Residues 370–379 (SPHRRAKRPR) are compositionally biased toward basic residues. The span at 382–392 (SSSSSDTSPRS) shows a compositional bias: low complexity.

Phosphorylated. May also be weakly phosphorylated on Tyr residues.

The protein resides in the nucleus. It is found in the nucleus envelope. Functionally, required for proper positioning of a substantial amount of TPR at the nuclear basket (NB) through interaction with TPR. The protein is Zinc finger C3HC-type protein 1-like (zc3hc1) of Xenopus laevis (African clawed frog).